A 688-amino-acid chain; its full sequence is ATP-dependent zinc metalloprotease FTSH 6, chloroplastic (688 aa).

A chloroplast-targeting transit peptide spans 1–75 (MKMASSSSAL…GFTSALGTVL (75 aa)). A compositionally biased stretch (polar residues) spans 25-36 (QQFQKPASLSKS). A disordered region spans residues 25-44 (QQFQKPASLSKSSHTHKPSL). The transit peptide at 76–83 (AHPAKAEP) directs the protein to the thylakoid. Residues 84–168 (EAPIEATSNR…AHPMNVNWGA (85 aa)) are Lumenal, thylakoid-facing. A helical transmembrane segment spans residues 169–189 (FLLNFLGNLGFPLILLVSLLL). The Stromal segment spans residues 190-688 (TSSSRRNPAG…RIRINDLISV (499 aa)). 264–271 (GPPGTGKT) is a binding site for ATP. Histidine 485 is a binding site for Zn(2+). Residue glutamate 486 is part of the active site. Zn(2+)-binding residues include histidine 489 and aspartate 563.

The protein in the N-terminal section; belongs to the AAA ATPase family. It in the C-terminal section; belongs to the peptidase M41 family. The cofactor is Zn(2+).

The protein localises to the plastid. It is found in the chloroplast thylakoid membrane. Functionally, probable ATP-dependent zinc metallopeptidase. Involved in the degradation of the light-harvesting complex of photosystem II (LHC II) during senescence or high light acclimation. This Arabidopsis thaliana (Mouse-ear cress) protein is ATP-dependent zinc metalloprotease FTSH 6, chloroplastic (FTSH6).